Here is a 742-residue protein sequence, read N- to C-terminus: Probable LRR receptor-like serine/threonine-protein kinase At2g02780 (742 aa).

The first 25 residues, 1-25 (MQISLQIHLSSFTFLLLIFLLPVLS), serve as a signal peptide directing secretion. At 26–354 (ESQVASSESQ…KDSARIKLGL (329 aa)) the chain is on the extracellular side. LRR repeat units follow at residues 74–96 (HGHV…SFHK), 104–128 (LSSL…IITK), 130–154 (SPSL…IVSL), 156–177 (NLKS…DLRG), 178–204 (LSNL…KLTT), 206–223 (SLKN…IKKL), 224–247 (NNLQ…LFSI), 249–271 (SLQI…SCTS), and 273–294 (KIIT…CYSS). The N-linked (GlcNAc...) asparagine glycan is linked to N85. A glycan (N-linked (GlcNAc...) asparagine) is linked at N137. The N-linked (GlcNAc...) asparagine glycan is linked to N209. N266 carries an N-linked (GlcNAc...) asparagine glycan. An N-linked (GlcNAc...) asparagine glycan is attached at N299. The helical transmembrane segment at 355 to 375 (VILIIIGVIILAAILVLLVLI) threads the bilayer. The Cytoplasmic segment spans residues 376–742 (ALKRRRSRSE…HESSMKAIYE (367 aa)). A disordered region spans residues 386-424 (DDPFEVNNSNNERHASDKVSVCSTTTASSKSLPDSRRVP). Polar residues predominate over residues 406-417 (VCSTTTASSKSL). Residues 426 to 720 (TMRSAVIGLP…DVVWNLQYTI (295 aa)) enclose the Protein kinase domain.

It belongs to the protein kinase superfamily. Ser/Thr protein kinase family.

It localises to the membrane. The catalysed reaction is L-seryl-[protein] + ATP = O-phospho-L-seryl-[protein] + ADP + H(+). It catalyses the reaction L-threonyl-[protein] + ATP = O-phospho-L-threonyl-[protein] + ADP + H(+). The chain is Probable LRR receptor-like serine/threonine-protein kinase At2g02780 from Arabidopsis thaliana (Mouse-ear cress).